The chain runs to 220 residues: 7-cyano-7-deazaguanine synthase (220 aa).

10–20 (FSGGQDSTTCL) lines the ATP pocket. Positions 186, 195, 198, and 201 each coordinate Zn(2+).

This sequence belongs to the QueC family. Homodimer. Zn(2+) is required as a cofactor.

It carries out the reaction 7-carboxy-7-deazaguanine + NH4(+) + ATP = 7-cyano-7-deazaguanine + ADP + phosphate + H2O + H(+). It participates in purine metabolism; 7-cyano-7-deazaguanine biosynthesis. Functionally, catalyzes the ATP-dependent conversion of 7-carboxy-7-deazaguanine (CDG) to 7-cyano-7-deazaguanine (preQ(0)). The sequence is that of 7-cyano-7-deazaguanine synthase from Bacillus cereus (strain AH187).